The primary structure comprises 301 residues: Heterogeneous nuclear ribonucleoprotein D-like (301 aa).

A disordered region spans residues 1–29; sequence MEDATEMSGGAEEFAEGSKINASKNQQDD. RRM domains follow at residues 30-112 and 115-194; these read GKMF…KGKE and KKVF…QPKE. Disordered regions lie at residues 194–230 and 269–301; these read EVYRQQQQQQKGGKSNASGGRGGGRGRGRGQGQNWNQ and GYGPGYTDYSGQQSTYGKASRGGGNHQNNYQPY. Residues 212-224 show a composition bias toward gly residues; that stretch reads GGRGGGRGRGRGQ.

It localises to the nucleus. Its subcellular location is the cytoplasm. Functionally, acts as a transcriptional regulator. Binds DNA and RNA. This Gallus gallus (Chicken) protein is Heterogeneous nuclear ribonucleoprotein D-like (HNRNPDL).